Here is a 320-residue protein sequence, read N- to C-terminus: MSGPMRSYLDFEKPVAELDSKIDELRTLAASGSDIHEEIEKIEEKAQQALQDLYAALTPWQKTQVARHPQRPHCVDYIEGLIAEFTPLAGDRKFGDDEALVGGFGRFRGEAVCVIGQEKGSTTETRLRHNFGMARPEGYRKAVRLMEMADRFDLPVLSLVDTAGAYPGIGAEERGQAEAIARSTDACLQLGVPNVALVIGEGGSGGAIAIATANKVLMLEHAVYSVISPEAASSILWRDGTKAQEAANSMKITAQDLLKFGVIDQILAEPKGGAHRDPEAMIATAGDAIAAAFAELKGQGRDAIRAKRRQKFLDIGRKLA.

Residues 41-295 (KIEEKAQQAL…GDAIAAAFAE (255 aa)) enclose the CoA carboxyltransferase C-terminal domain.

This sequence belongs to the AccA family. Acetyl-CoA carboxylase is a heterohexamer composed of biotin carboxyl carrier protein (AccB), biotin carboxylase (AccC) and two subunits each of ACCase subunit alpha (AccA) and ACCase subunit beta (AccD).

It is found in the cytoplasm. The catalysed reaction is N(6)-carboxybiotinyl-L-lysyl-[protein] + acetyl-CoA = N(6)-biotinyl-L-lysyl-[protein] + malonyl-CoA. The protein operates within lipid metabolism; malonyl-CoA biosynthesis; malonyl-CoA from acetyl-CoA: step 1/1. In terms of biological role, component of the acetyl coenzyme A carboxylase (ACC) complex. First, biotin carboxylase catalyzes the carboxylation of biotin on its carrier protein (BCCP) and then the CO(2) group is transferred by the carboxyltransferase to acetyl-CoA to form malonyl-CoA. In Rhodopseudomonas palustris (strain ATCC BAA-98 / CGA009), this protein is Acetyl-coenzyme A carboxylase carboxyl transferase subunit alpha.